A 340-amino-acid polypeptide reads, in one-letter code: Ephrin-B3 (340 aa).

Residues 1–27 (MGAPHFGPGGVQVGALLLLGFAGLVSG) form the signal peptide. In terms of domain architecture, Ephrin RBD spans 28–167 (LSLEPVYWNS…TRGMKVLLRV (140 aa)). The Extracellular portion of the chain corresponds to 28–227 (LSLEPVYWNS…GPLPPPSMPA (200 aa)). Cystine bridges form between Cys62/Cys104 and Cys92/Cys156. The tract at residues 168–227 (GQSPRGGAVPRKPVSEMPMERDRGAAHSAEPGRDTIPGDPSSNATSRGAEGPLPPPSMPA) is disordered. Residues 185–200 (PMERDRGAAHSAEPGR) show a composition bias toward basic and acidic residues. N-linked (GlcNAc...) asparagine glycosylation is present at Asn210. The helical transmembrane segment at 228 to 248 (VAGAAGGMALLLLGVAGAGGA) threads the bilayer. Residues 249–340 (MCWRRRRAKP…QSPPNIYYKV (92 aa)) lie on the Cytoplasmic side of the membrane. A disordered region spans residues 254-300 (RRAKPSESRHPGPGSFGRGGSLGLGGGGGMGPREAEPGELGIALRGG). Gly residues predominate over residues 267–284 (GSFGRGGSLGLGGGGGMG). Omega-N-methylarginine is present on Arg271. Ser274 carries the post-translational modification Phosphoserine. The PDZ-binding signature appears at 338-340 (YKV).

This sequence belongs to the ephrin family. In terms of assembly, interacts with GRIP1 and GRIP2. As to expression, expressed on lateral floor plate cells, specifically on commissural axon segments that have passed through the floor plate. Expressed in cells of the retinal ganglion cell layer during retinal axon guidance to the optic disk. Expressed in myogenic progenitor cells.

The protein resides in the membrane. Cell surface transmembrane ligand for Eph receptors, a family of receptor tyrosine kinases which are crucial for migration, repulsion and adhesion during neuronal, vascular and epithelial development. Binds promiscuously Eph receptors residing on adjacent cells, leading to contact-dependent bidirectional signaling into neighboring cells. The signaling pathway downstream of the receptor is referred to as forward signaling while the signaling pathway downstream of the ephrin ligand is referred to as reverse signaling. May play a pivotal role in forebrain function. Binds to, and induce the collapse of, commissural axons/growth cones in vitro. May play a role in constraining the orientation of longitudinally projecting axons. The protein is Ephrin-B3 (Efnb3) of Mus musculus (Mouse).